We begin with the raw amino-acid sequence, 220 residues long: MTSGEVKTSLKNAYSSAKRLSPKMEEEGEEEDYCTPGAFELERLFWKGSPQYTHVNEVWPKLYIGDEATALDRYRLQKAGFTHVLNAAHGRWNVDTGPDYYRDMDIQYHGVEADDLPTFDLSVFFYPAAAFIDRALSDDHSKILVHCVMGRSRSATLVLAYLMIHKDMTLVDAIQQVAKNRCVLPNRGFLKQLRELDKQLVQQRRRSQRQDGEEEDGREL.

The span at 1-15 (MTSGEVKTSLKNAYS) shows a compositional bias: polar residues. Residues 1 to 29 (MTSGEVKTSLKNAYSSAKRLSPKMEEEGE) are disordered. Residues 54–202 (HVNEVWPKLY…LRELDKQLVQ (149 aa)) form the Tyrosine-protein phosphatase domain. 146–153 (HCVMGRSR) is a binding site for substrate. The active-site Phosphocysteine intermediate is Cys147.

This sequence belongs to the protein-tyrosine phosphatase family. Non-receptor class dual specificity subfamily. Homodimer. Interacts with PRKAA2.

It is found in the cytoplasm. The protein localises to the nucleus. The catalysed reaction is O-phospho-L-tyrosyl-[protein] + H2O = L-tyrosyl-[protein] + phosphate. It carries out the reaction O-phospho-L-seryl-[protein] + H2O = L-seryl-[protein] + phosphate. It catalyses the reaction O-phospho-L-threonyl-[protein] + H2O = L-threonyl-[protein] + phosphate. In terms of biological role, dual specificity phosphatase able to dephosphorylate phosphotyrosine, phosphoserine and phosphothreonine residues within the same substrate, with a preference for phosphotyrosine as a substrate. Involved in the modulation of intracellular signaling cascades. In skeletal muscle regulates systemic glucose homeostasis by activating, AMPK, an energy sensor protein kinase. Affects MAP kinase signaling though modulation of the MAPK1/2 cascade in skeletal muscle promoting muscle cell differentiation, development and atrophy. The sequence is that of Dual specificity phosphatase 29 from Homo sapiens (Human).